The primary structure comprises 285 residues: Involucrin (285 aa).

3 disordered regions span residues 1-93, 120-256, and 266-285; these read MSQQ…QEQK, LEQQ…AQVQ, and LPLIEQQHQKQEVHDPPEHQ. The span at 27–39 shows a compositional bias: polar residues; it reads IDTQQEQVKQPTS. Composition is skewed to low complexity over residues 72 to 87, 120 to 129, and 137 to 147; these read EQQCEPQEQEQQQKQQ, LEQQQEQQES, and EQCLEQQQEQQ. 3 stretches are compositionally biased toward basic and acidic residues: residues 149 to 165, 175 to 185, and 200 to 233; these read SQEKELHLEQEQQKEEL, EQCEKHQEAKN, and QQKEQLEQEKKLVDQHLDQEPAQRTEQPEKKEEQ. The segment covering 235 to 248 has biased composition (low complexity); the sequence is LEQQGQQEGQLEQP. Residues 272-285 are compositionally biased toward basic and acidic residues; the sequence is QHQKQEVHDPPEHQ.

The protein belongs to the involucrin family. Directly or indirectly cross-linked to cornifelin (CNFN). Substrate of transglutaminase. Specific glutamines or lysines are cross-linked to keratins, desmoplakin and to inter involucrin molecules. Keratinocytes of epidermis and other stratified squamous epithelia.

The protein localises to the cytoplasm. Part of the insoluble cornified cell envelope (CE) of stratified squamous epithelia. In Canis lupus familiaris (Dog), this protein is Involucrin (IVL).